The sequence spans 91 residues: Thioredoxin (91 aa).

In terms of domain architecture, Thioredoxin spans serine 2 to lysine 91. Cysteines 33 and 36 form a disulfide.

This sequence belongs to the thioredoxin family.

In terms of biological role, participates in various redox reactions through the reversible oxidation of its active center dithiol to a disulfide and catalyzes dithiol-disulfide exchange reactions. The chain is Thioredoxin (trxA) from Thiocapsa roseopersicina.